The following is a 129-amino-acid chain: Small ribosomal subunit protein uS11 (129 aa).

This sequence belongs to the universal ribosomal protein uS11 family. As to quaternary structure, part of the 30S ribosomal subunit. Interacts with proteins S7 and S18. Binds to IF-3.

Functionally, located on the platform of the 30S subunit, it bridges several disparate RNA helices of the 16S rRNA. Forms part of the Shine-Dalgarno cleft in the 70S ribosome. The chain is Small ribosomal subunit protein uS11 from Enterococcus faecalis (strain ATCC 700802 / V583).